The primary structure comprises 853 residues: DNA mismatch repair protein MutS (853 aa).

Residue 613–620 (GPNMGGKS) coordinates ATP.

It belongs to the DNA mismatch repair MutS family.

In terms of biological role, this protein is involved in the repair of mismatches in DNA. It is possible that it carries out the mismatch recognition step. This protein has a weak ATPase activity. The polypeptide is DNA mismatch repair protein MutS (Vibrio atlanticus (strain LGP32) (Vibrio splendidus (strain Mel32))).